The following is a 206-amino-acid chain: Large ribosomal subunit protein uL4 (206 aa).

The interval 43-78 (ARSGNRKQKDREEVKHTTKKPWRQKGTGRARAGMSS) is disordered. Basic and acidic residues predominate over residues 49–58 (KQKDREEVKH). Residues 59 to 70 (TTKKPWRQKGTG) are compositionally biased toward basic residues.

Belongs to the universal ribosomal protein uL4 family. In terms of assembly, part of the 50S ribosomal subunit.

Functionally, one of the primary rRNA binding proteins, this protein initially binds near the 5'-end of the 23S rRNA. It is important during the early stages of 50S assembly. It makes multiple contacts with different domains of the 23S rRNA in the assembled 50S subunit and ribosome. Forms part of the polypeptide exit tunnel. In Cupriavidus pinatubonensis (strain JMP 134 / LMG 1197) (Cupriavidus necator (strain JMP 134)), this protein is Large ribosomal subunit protein uL4.